The following is a 565-amino-acid chain: Perivitellin-2 67 kDa subunit (565 aa).

The N-terminal stretch at 1–26 (MSQLRWWVVSQVLLLIAICSLDHSEG) is a signal peptide. An MACPF domain is found at 27 to 340 (ARVCPKIVPG…AKVANLDRLT (314 aa)). The tract at residues 387–565 (VPAWFSDRTT…CGMSWALIAK (179 aa)) is invertebrate MACPF Accessory Domain (IMAD).

In terms of assembly, perivitellin-2 is a dimer of heterodimers held together head-to-tail by non-covalent forces. The heterodimer is composed of the tachylectin subunit (31 kDa) and the MACPF subunit (67 kDa) that are disulfide-linked. In terms of processing, PV2 is a very high density lipoprotein (VHDL). It contains 3.75% of lipids. The major lipid classes are free sterols and phospholipids and also have significant quantities of energy-providing triacylglycerides and free fatty acids. As to expression, produced by albumen secretory cells. Found in developing eggs.

It is found in the secreted. Its subcellular location is the target cell membrane. Functionally, the egg defensive protein perivitellin-2 is a pore-forming two-subunit glycoprotein that affects both the nervous and digestive systems of mammals. In addition, it is a source of both structural and energetic molecules during embryonic development. The tachylectin subunit (31 kDa) binds target membranes while the MACPF subunit (67 kDa) disrupts lipid bilayers forming large pores (inner diameter of about 5.6 nm) altering the plasma membrance conductance. Both in vivo and in vitro, the protein shows wide pH range stability and is resistant to enzymatic proteolysis from gastrointestinal environments. It is cytotoxic to both epithelial and immune cells from the digestive system of mammals. It induces enterocyte death by a lytic mechanism and disrupts enterocyte monolayers in a dose-dependent manner. After oral administration to mice, it binds enterocytes and induces large dose-dependent morphological changes on their small intestine mucosa, reducing the absorptive surface. Additionally, it is detected in the Peyer's patches where it activates lymphoid follicles and triggers apoptosis. The toxin can also traverse the intestinal barrier and induce oral adaptive immunity with evidence of circulating antibody response. The toxin also shows hemagglutination properties thanks to the tachylectin subunit, but has no hemolytic activity. In addition to enterotoxin activity, the toxin also acts as a neurotoxin, since an intraperitoneal injection can induce paralysis of the mice rear limbs, followed by death. This Pomacea maculata (Giant applesnail) protein is Perivitellin-2 67 kDa subunit.